A 262-amino-acid polypeptide reads, in one-letter code: Acyl-[acyl-carrier-protein]--UDP-N-acetylglucosamine O-acyltransferase (262 aa).

Belongs to the transferase hexapeptide repeat family. LpxA subfamily. Homotrimer.

The protein localises to the cytoplasm. It catalyses the reaction a (3R)-hydroxyacyl-[ACP] + UDP-N-acetyl-alpha-D-glucosamine = a UDP-3-O-[(3R)-3-hydroxyacyl]-N-acetyl-alpha-D-glucosamine + holo-[ACP]. It functions in the pathway glycolipid biosynthesis; lipid IV(A) biosynthesis; lipid IV(A) from (3R)-3-hydroxytetradecanoyl-[acyl-carrier-protein] and UDP-N-acetyl-alpha-D-glucosamine: step 1/6. Functionally, involved in the biosynthesis of lipid A, a phosphorylated glycolipid that anchors the lipopolysaccharide to the outer membrane of the cell. The sequence is that of Acyl-[acyl-carrier-protein]--UDP-N-acetylglucosamine O-acyltransferase from Pectobacterium carotovorum subsp. carotovorum (strain PC1).